Here is a 186-residue protein sequence, read N- to C-terminus: Translation initiation factor IF-3 (186 aa).

The segment at 1–21 (MINRSSGKDRDRSRSGDKELR) is disordered.

This sequence belongs to the IF-3 family. As to quaternary structure, monomer.

Its subcellular location is the cytoplasm. In terms of biological role, IF-3 binds to the 30S ribosomal subunit and shifts the equilibrium between 70S ribosomes and their 50S and 30S subunits in favor of the free subunits, thus enhancing the availability of 30S subunits on which protein synthesis initiation begins. This chain is Translation initiation factor IF-3, found in Borrelia turicatae (strain 91E135).